Here is a 155-residue protein sequence, read N- to C-terminus: 2-C-methyl-D-erythritol 2,4-cyclodiphosphate synthase (155 aa).

A divalent metal cation-binding residues include Asp-9 and His-11. Residues 9–11 and 35–36 each bind 4-CDP-2-C-methyl-D-erythritol 2-phosphate; these read DSH and HS. An a divalent metal cation-binding site is contributed by His-43. 57 to 59 contributes to the 4-CDP-2-C-methyl-D-erythritol 2-phosphate binding site; that stretch reads DIG.

Belongs to the IspF family. In terms of assembly, homotrimer. Requires a divalent metal cation as cofactor.

It carries out the reaction 4-CDP-2-C-methyl-D-erythritol 2-phosphate = 2-C-methyl-D-erythritol 2,4-cyclic diphosphate + CMP. The protein operates within isoprenoid biosynthesis; isopentenyl diphosphate biosynthesis via DXP pathway; isopentenyl diphosphate from 1-deoxy-D-xylulose 5-phosphate: step 4/6. Functionally, involved in the biosynthesis of isopentenyl diphosphate (IPP) and dimethylallyl diphosphate (DMAPP), two major building blocks of isoprenoid compounds. Catalyzes the conversion of 4-diphosphocytidyl-2-C-methyl-D-erythritol 2-phosphate (CDP-ME2P) to 2-C-methyl-D-erythritol 2,4-cyclodiphosphate (ME-CPP) with a corresponding release of cytidine 5-monophosphate (CMP). The sequence is that of 2-C-methyl-D-erythritol 2,4-cyclodiphosphate synthase from Koribacter versatilis (strain Ellin345).